Consider the following 480-residue polypeptide: Zinc finger protein ztf-6 (480 aa).

Disordered regions lie at residues 92–160 (CHDS…TMMV), 174–198 (GTNG…EEHD), 282–307 (LDAG…PTAS), and 328–351 (DANT…MKVP). Composition is skewed to low complexity over residues 95 to 105 (SATSTTTTVSH), 131 to 145 (SSIE…SSSV), 174 to 187 (GTNG…TSSS), and 286 to 296 (SSENDGSTSSS). 2 C2H2-type zinc fingers span residues 359 to 383 (YICP…FVTH) and 388 to 410 (FNCD…QKIH). The C2H2-type 3; degenerate zinc finger occupies 416 to 441 (YQCRGCGTNYTTQNGLRLHRQRNPAC). The tract at residues 461–480 (ALSGPLSKNSSPTKQMVSAP) is disordered.

Probable transcription factor, involved in regulation of dopamine neuron lineage specification. May play a role in maintaining robustness of the Wnt/beta-catenin asymmetry pathway. This is Zinc finger protein ztf-6 from Caenorhabditis elegans.